We begin with the raw amino-acid sequence, 254 residues long: Arginine/ornithine transport ATP-binding protein AotP (254 aa).

One can recognise an ABC transporter domain in the interval Leu4–Leu249. Residue Gly36–Ser43 participates in ATP binding.

Belongs to the ABC transporter superfamily.

It is found in the cell inner membrane. In terms of biological role, part of the arginine-inducible binding-protein-dependent transport system for arginine and ornithine. Probably responsible for energy coupling to the transport system. In Pseudomonas aeruginosa (strain ATCC 15692 / DSM 22644 / CIP 104116 / JCM 14847 / LMG 12228 / 1C / PRS 101 / PAO1), this protein is Arginine/ornithine transport ATP-binding protein AotP (aotP).